A 477-amino-acid chain; its full sequence is MTRQSLWDLSETDVEDGEIRINVGGFKRRLRSHTLLRFPETRLGRLLLCHSREAILELCDDYDDVQREFYFDRNPELFPYVLHFYHTGKLHVMAELCVFSFSQEIEYWGINEFFIDSCCSYSYHGRKVEPEQEKWDEQSDQESTTSSFDEILAFYNDASKFDGQPLGNFRRQLWLALDNPGYSVLSRVFSVLSILVVLGSIITMCLNSLPDFQIPDSQGNPGEDPRFEIVEHFGIAWFTFELVARFAVAPDFLKFFKNALNLIDLMSIVPFYITLVVNLVVESSPTLANLGRVAQVLRLMRIFRILKLARHSTGLRSLGATLKYSYKEVGLLLLYLSVGISIFSVVAYTIEKEENEGLATIPACWWWATVSMTTVGYGDVVPGTTAGKLTASACILAGILVVVLPITLIFNKFSHFYRRQKQLESAMRSCDFGDGMKEVPSVNLRDYYAHKVKSLMASLTNMSRSSPSELSLDDSLH.

Over 1–184 (MTRQSLWDLS…LALDNPGYSV (184 aa)) the chain is Cytoplasmic. The helical transmembrane segment at 185–206 (LSRVFSVLSILVVLGSIITMCL) threads the bilayer. Topologically, residues 207-225 (NSLPDFQIPDSQGNPGEDP) are extracellular. A helical membrane pass occupies residues 226-248 (RFEIVEHFGIAWFTFELVARFAV). Over 249–259 (APDFLKFFKNA) the chain is Cytoplasmic. The chain crosses the membrane as a helical span at residues 260-280 (LNLIDLMSIVPFYITLVVNLV). The Extracellular segment spans residues 281 to 290 (VESSPTLANL). A helical; Voltage-sensor membrane pass occupies residues 291 to 311 (GRVAQVLRLMRIFRILKLARH). The Cytoplasmic portion of the chain corresponds to 312–326 (STGLRSLGATLKYSY). The chain crosses the membrane as a helical span at residues 327–348 (KEVGLLLLYLSVGISIFSVVAY). At 349–361 (TIEKEENEGLATI) the chain is on the extracellular side. The helical intramembrane region spans 362-373 (PACWWWATVSMT). Positions 374–379 (TVGYGD) match the Selectivity filter motif. The stretch at 374–381 (TVGYGDVV) is an intramembrane region. Residues 382–388 (PGTTAGK) lie on the Extracellular side of the membrane. A helical transmembrane segment spans residues 389–417 (LTASACILAGILVVVLPITLIFNKFSHFY). At 418–477 (RRQKQLESAMRSCDFGDGMKEVPSVNLRDYYAHKVKSLMASLTNMSRSSPSELSLDDSLH) the chain is on the cytoplasmic side.

Belongs to the potassium channel family. S (TC 1.A.1.2) subfamily. Kv9.2/KCNS2 sub-subfamily. In terms of assembly, heterotetramer with KCNB1 and KCNB2. Does not form homomultimers. Detected in brain, lung and in pulmonary arteries.

The protein localises to the cell membrane. Potassium channel regulatory subunit that modulate the delayed rectifier voltage-gated potassium channel activity of KCNB1 and KCNB2 by altering their kinetics, expression levels, and shifting the half-inactivation potential to more polarized values. While it does not form functional channels on its own, it can form functional heterotetrameric channels with KCNB1 and KCNB2. Each regulatory subunit has unique regulatory properties that can lead to extensive inhibition, significant changes in kinetics, and/or substantial shifts in the voltage dependencies of the inactivation process. In Rattus norvegicus (Rat), this protein is Delayed-rectifier potassium channel regulatory subunit KCNS2.